Reading from the N-terminus, the 508-residue chain is Histidine ammonia-lyase (508 aa).

Positions 145–147 (ASG) form a cross-link, 5-imidazolinone (Ala-Gly). Residue Ser-146 is modified to 2,3-didehydroalanine (Ser).

The protein belongs to the PAL/histidase family. In terms of processing, contains an active site 4-methylidene-imidazol-5-one (MIO), which is formed autocatalytically by cyclization and dehydration of residues Ala-Ser-Gly.

It localises to the cytoplasm. The enzyme catalyses L-histidine = trans-urocanate + NH4(+). It functions in the pathway amino-acid degradation; L-histidine degradation into L-glutamate; N-formimidoyl-L-glutamate from L-histidine: step 1/3. The chain is Histidine ammonia-lyase from Myxococcus xanthus (strain DK1622).